The following is a 344-amino-acid chain: Nicotinate-nucleotide--dimethylbenzimidazole phosphoribosyltransferase (344 aa).

E310 acts as the Proton acceptor in catalysis.

It belongs to the CobT family.

The catalysed reaction is 5,6-dimethylbenzimidazole + nicotinate beta-D-ribonucleotide = alpha-ribazole 5'-phosphate + nicotinate + H(+). It participates in nucleoside biosynthesis; alpha-ribazole biosynthesis; alpha-ribazole from 5,6-dimethylbenzimidazole: step 1/2. Its function is as follows. Catalyzes the synthesis of alpha-ribazole-5'-phosphate from nicotinate mononucleotide (NAMN) and 5,6-dimethylbenzimidazole (DMB). The chain is Nicotinate-nucleotide--dimethylbenzimidazole phosphoribosyltransferase from Shewanella amazonensis (strain ATCC BAA-1098 / SB2B).